We begin with the raw amino-acid sequence, 237 residues long: Carboxy-S-adenosyl-L-methionine synthase (237 aa).

S-adenosyl-L-methionine is bound by residues Tyr36, 61 to 63 (GAS), 86 to 87 (DN), 112 to 113 (DI), Asn127, and Arg194.

The protein belongs to the class I-like SAM-binding methyltransferase superfamily. Cx-SAM synthase family. In terms of assembly, homodimer.

The enzyme catalyses prephenate + S-adenosyl-L-methionine = carboxy-S-adenosyl-L-methionine + 3-phenylpyruvate + H2O. Its function is as follows. Catalyzes the conversion of S-adenosyl-L-methionine (SAM) to carboxy-S-adenosyl-L-methionine (Cx-SAM). In Ruthia magnifica subsp. Calyptogena magnifica, this protein is Carboxy-S-adenosyl-L-methionine synthase.